Consider the following 203-residue polypeptide: Glycerol-3-phosphate acyltransferase (203 aa).

6 helical membrane passes run 1 to 21 (MPAWLSALLAALGGYLLGSIP), 52 to 72 (VGKGPALLVLLVDAAKGAAAV), 73 to 93 (ALGSALGSPWWVVVAALGAVI), 115 to 135 (ILLAMAWPVALATFGVWLLGI), 140 to 160 (IVSFSSLLAAVAAPLLMWALG), and 161 to 181 (QPLPYLLFALAGGVYVIAAHR).

Belongs to the PlsY family. Probably interacts with PlsX.

It is found in the cell inner membrane. It catalyses the reaction an acyl phosphate + sn-glycerol 3-phosphate = a 1-acyl-sn-glycero-3-phosphate + phosphate. Its pathway is lipid metabolism; phospholipid metabolism. In terms of biological role, catalyzes the transfer of an acyl group from acyl-phosphate (acyl-PO(4)) to glycerol-3-phosphate (G3P) to form lysophosphatidic acid (LPA). This enzyme utilizes acyl-phosphate as fatty acyl donor, but not acyl-CoA or acyl-ACP. The sequence is that of Glycerol-3-phosphate acyltransferase from Synechococcus sp. (strain JA-3-3Ab) (Cyanobacteria bacterium Yellowstone A-Prime).